Reading from the N-terminus, the 367-residue chain is Queuine tRNA-ribosyltransferase (367 aa).

The active-site Proton acceptor is the D92. Substrate contacts are provided by residues 92-96, D146, Q188, and G215; that span reads DSGGF. The interval 246–252 is RNA binding; the sequence is GVGTPKD. D265 acts as the Nucleophile in catalysis. Residues C303, C305, C308, and H334 each contribute to the Zn(2+) site.

Belongs to the queuine tRNA-ribosyltransferase family. In terms of assembly, homodimer. Within each dimer, one monomer is responsible for RNA recognition and catalysis, while the other monomer binds to the replacement base PreQ1. Requires Zn(2+) as cofactor.

It catalyses the reaction 7-aminomethyl-7-carbaguanine + guanosine(34) in tRNA = 7-aminomethyl-7-carbaguanosine(34) in tRNA + guanine. Its pathway is tRNA modification; tRNA-queuosine biosynthesis. In terms of biological role, catalyzes the base-exchange of a guanine (G) residue with the queuine precursor 7-aminomethyl-7-deazaguanine (PreQ1) at position 34 (anticodon wobble position) in tRNAs with GU(N) anticodons (tRNA-Asp, -Asn, -His and -Tyr). Catalysis occurs through a double-displacement mechanism. The nucleophile active site attacks the C1' of nucleotide 34 to detach the guanine base from the RNA, forming a covalent enzyme-RNA intermediate. The proton acceptor active site deprotonates the incoming PreQ1, allowing a nucleophilic attack on the C1' of the ribose to form the product. After dissociation, two additional enzymatic reactions on the tRNA convert PreQ1 to queuine (Q), resulting in the hypermodified nucleoside queuosine (7-(((4,5-cis-dihydroxy-2-cyclopenten-1-yl)amino)methyl)-7-deazaguanosine). This Francisella tularensis subsp. novicida (strain U112) protein is Queuine tRNA-ribosyltransferase.